Here is a 4092-residue protein sequence, read N- to C-terminus: Dynein heavy chain, cytoplasmic (4092 aa).

The tract at residues 1-1757 (MCKNEARLAN…FISQSGYLLQ (1757 aa)) is stem. Coiled coils occupy residues 154–175 (VETIDKTRRKLDDISKQFQQLH), 486–508 (KLEQAESEFSKNMLDLEKKLQNT), 542–566 (KVLENQQILLLEIKKDIRQLETGLE), 932–959 (VIKLKDDIQNCIEQVQNLHCKINSYVKE), 1042–1063 (YERDARKLHEDMNRDREAVEDM), and 1681–1705 (KGLLDKLNKSSDNVKKKIEALLVEY). AAA stretches follow at residues 1758–1979 (YKFE…VLRN), 2036–2273 (QCLK…NDLV), 2379–2628 (SLEA…LVRG), and 2722–2984 (TFCD…KVGV). Residues 1796–1803 (GPAGTGKT), 2074–2081 (GKAGCGKT), 2418–2425 (GPPGSGKT), and 2760–2767 (GASRTGKT) each bind ATP. 3 coiled-coil regions span residues 2993–3092 (IDGL…KRKE), 3242–3300 (KTKA…KSLT), and 3532–3608 (ITLT…EEFF). A stalk region spans residues 2993–3300 (IDGLRALVKL…RSISLVKSLT (308 aa)). 2 AAA regions span residues 3370–3599 (LVTL…NIEK) and 3760–3970 (LNWF…YLEN).

It belongs to the dynein heavy chain family. In terms of assembly, the dynein complex consists of at least two heavy chains and a number of intermediate and light chains. Interacts with DYN3.

Its subcellular location is the cytoplasm. The protein localises to the cytoskeleton. Cytoplasmic dynein acts as a motor for the intracellular retrograde motility of vesicles and organelles along microtubules. Dynein has ATPase activity; the force-producing power stroke is thought to occur on release of ADP. Required to maintain uniform nuclear distribution in hyphae. May play an important role in the proper orientation of the mitotic spindle into the budding daughter cell yeast. Probably required for normal progression of the cell cycle. The sequence is that of Dynein heavy chain, cytoplasmic (DYN1) from Saccharomyces cerevisiae (strain ATCC 204508 / S288c) (Baker's yeast).